A 426-amino-acid chain; its full sequence is Anaerobic glycerol-3-phosphate dehydrogenase subunit B (426 aa).

This sequence belongs to the anaerobic G-3-P dehydrogenase subunit B family. Composed of a catalytic GlpA/B dimer and of membrane bound GlpC. It depends on FMN as a cofactor.

It carries out the reaction a quinone + sn-glycerol 3-phosphate = dihydroxyacetone phosphate + a quinol. Its pathway is polyol metabolism; glycerol degradation via glycerol kinase pathway; glycerone phosphate from sn-glycerol 3-phosphate (anaerobic route): step 1/1. Functionally, conversion of glycerol 3-phosphate to dihydroxyacetone. Uses fumarate or nitrate as electron acceptor. The polypeptide is Anaerobic glycerol-3-phosphate dehydrogenase subunit B (Haemophilus ducreyi (strain 35000HP / ATCC 700724)).